A 471-amino-acid polypeptide reads, in one-letter code: Histidinol dehydrogenase (471 aa).

NAD(+) is bound by residues Y139, Q204, and N236. Positions 259, 281, and 284 each coordinate substrate. Residues Q281 and H284 each contribute to the Zn(2+) site. Catalysis depends on proton acceptor residues E350 and H351. Substrate contacts are provided by H351, D384, E438, and H443. D384 contributes to the Zn(2+) binding site. H443 contacts Zn(2+).

Belongs to the histidinol dehydrogenase family. The cofactor is Zn(2+).

The catalysed reaction is L-histidinol + 2 NAD(+) + H2O = L-histidine + 2 NADH + 3 H(+). It functions in the pathway amino-acid biosynthesis; L-histidine biosynthesis; L-histidine from 5-phospho-alpha-D-ribose 1-diphosphate: step 9/9. Functionally, catalyzes the sequential NAD-dependent oxidations of L-histidinol to L-histidinaldehyde and then to L-histidine. The sequence is that of Histidinol dehydrogenase from Bifidobacterium longum (strain NCC 2705).